The following is a 427-amino-acid chain: Putative acyl-CoA thioester hydrolase YbhC (427 aa).

The first 21 residues, 1–21 (MNTFSVSRLALALAFGVTLTA), serve as a signal peptide directing secretion. Cys-22 carries the N-palmitoyl cysteine lipid modification. Cys-22 carries the S-diacylglycerol cysteine lipid modification. The tract at residues 23–42 (SSTPPDQRPSDQTAPGTSSR) is disordered. Cys-185 and Cys-197 form a disulfide bridge. Asp-285 (nucleophile) is an active-site residue. Arg-345 contributes to the substrate binding site.

It belongs to the pectinesterase family.

The protein localises to the cell outer membrane. Its function is as follows. Putative thioesterase. Does not bind pectin, and has no pectinesterase activity. This is Putative acyl-CoA thioester hydrolase YbhC (ybhC) from Escherichia coli (strain K12).